We begin with the raw amino-acid sequence, 1115 residues long: Eukaryotic translation initiation factor 2-alpha kinase 3 (1115 aa).

The first 29 residues, Met-1–Ala-29, serve as a signal peptide directing secretion. Over Arg-30–Asp-514 the chain is Extracellular. Positions Ser-74 to Pro-101 are disordered. Residue Asn-259 is glycosylated (N-linked (GlcNAc...) asparagine). The chain crosses the membrane as a helical span at residues Pro-515 to Ala-535. Residues Thr-536–Asn-1115 lie on the Cytoplasmic side of the membrane. One can recognise a Protein kinase domain in the interval Phe-593–Phe-1076. Met-599–Val-607 contacts ATP. Tyr-619 is modified (phosphotyrosine; by autocatalysis). Lys-622 lines the ATP pocket. Residues Glu-647–Met-887 are insert loop. Ser-715 carries the post-translational modification Phosphoserine. The residue at position 802 (Thr-802) is a Phosphothreonine. Disordered regions lie at residues Val-807–His-832 and Arg-841–Thr-860. Residues Ser-845–Thr-860 show a composition bias toward polar residues. Asp-936 functions as the Proton acceptor in the catalytic mechanism. Residue Thr-981 is modified to Phosphothreonine. Residues Leu-1087–Asn-1115 are disordered. Phosphoserine is present on Ser-1093.

The protein belongs to the protein kinase superfamily. Ser/Thr protein kinase family. GCN2 subfamily. Forms dimers with HSPA5/BIP in resting cells. Homotetramerizes in response to endoplasmic reticulum (ER) stress, leading to its activation. Interacts with HSP90B1/GRP94. Interacts with DNAJC3; inhibiting EIF2AK3/PERK activity. Interacts with ATAD3A; ATAD3A and EIF2S1/eIF-2-alpha occupy a common binding site within the cytoplasmic loop of EIF2AK3/PERK, leading to prevent EIF2AK3/PERK association with its substrate EIF2S1/eIF-2-alpha. Interacts with MFN2. Interacts with TMEM33. Interacts with PDIA6. Interacts with LACC1. In terms of processing, oligomerization of the N-terminal ER luminal domain by ER stress promotes EIF2AK3/PERK trans-autophosphorylation of the C-terminal cytoplasmic kinase domain at multiple residues including Thr-981 on the kinase activation loop. Autophosphorylated at Tyr-619 following endoplasmic reticulum stress, leading to activate its activity. Dephosphorylated at Tyr-619 by PTPN1/PTP1B, leading to inactivate its enzyme activity. Phosphorylation at Thr-802 by AKT (AKT1, AKT2 and/or AKT3) inactivates EIF2AK3/PERK. ADP-ribosylated by PARP16 upon ER stress, which increases kinase activity.

It localises to the endoplasmic reticulum membrane. It catalyses the reaction L-seryl-[protein] + ATP = O-phospho-L-seryl-[protein] + ADP + H(+). The catalysed reaction is L-threonyl-[protein] + ATP = O-phospho-L-threonyl-[protein] + ADP + H(+). The enzyme catalyses L-tyrosyl-[protein] + ATP = O-phospho-L-tyrosyl-[protein] + ADP + H(+). Its activity is regulated as follows. Inhibited by HSPA5/BIP in absence of stress. Perturbation in protein folding in the endoplasmic reticulum (ER) promotes reversible dissociation from HSPA5/BIP and oligomerization, resulting in trans-autophosphorylation and kinase activity induction. Inactivated following phosphorylation at Thr-802 by AKT (AKT1, AKT2 and/or AKT3). Inhibited by ATAD3A at mitochondria-endoplasmic reticulum contact sites, providing a safe haven for mitochondrial protein translation during ER stress. Its function is as follows. Metabolic-stress sensing protein kinase that phosphorylates the alpha subunit of eukaryotic translation initiation factor 2 (EIF2S1/eIF-2-alpha) in response to various stress, such as unfolded protein response (UPR). Key effector of the integrated stress response (ISR) to unfolded proteins: EIF2AK3/PERK specifically recognizes and binds misfolded proteins, leading to its activation and EIF2S1/eIF-2-alpha phosphorylation. EIF2S1/eIF-2-alpha phosphorylation in response to stress converts EIF2S1/eIF-2-alpha in a global protein synthesis inhibitor, leading to a global attenuation of cap-dependent translation, while concomitantly initiating the preferential translation of ISR-specific mRNAs, such as the transcriptional activators ATF4 and QRICH1, and hence allowing ATF4- and QRICH1-mediated reprogramming. The EIF2AK3/PERK-mediated unfolded protein response increases mitochondrial oxidative phosphorylation by promoting ATF4-mediated expression of COX7A2L/SCAF1, thereby increasing formation of respiratory chain supercomplexes. In contrast to most subcellular compartments, mitochondria are protected from the EIF2AK3/PERK-mediated unfolded protein response due to EIF2AK3/PERK inhibition by ATAD3A at mitochondria-endoplasmic reticulum contact sites. In addition to EIF2S1/eIF-2-alpha, also phosphorylates NFE2L2/NRF2 in response to stress, promoting release of NFE2L2/NRF2 from the BCR(KEAP1) complex, leading to nuclear accumulation and activation of NFE2L2/NRF2. Serves as a critical effector of unfolded protein response (UPR)-induced G1 growth arrest due to the loss of cyclin-D1 (CCND1). Involved in control of mitochondrial morphology and function. This is Eukaryotic translation initiation factor 2-alpha kinase 3 from Bos taurus (Bovine).